Reading from the N-terminus, the 178-residue chain is Tetratricopeptide repeat protein 9C (178 aa).

TPR repeat units follow at residues A15–L48, A79–N114, and V115–D148.

The protein belongs to the TTC9 family.

In Xenopus tropicalis (Western clawed frog), this protein is Tetratricopeptide repeat protein 9C (ttc9c).